The following is a 539-amino-acid chain: Protein lin-14 (539 aa).

Disordered stretches follow at residues Pro-162–Ser-230 and Glu-262–Pro-293. Composition is skewed to polar residues over residues Thr-163 to Asp-183 and Ser-193 to Ile-214. Over residues Asn-274–Gly-284 the composition is skewed to low complexity. Residues Asp-296–Thr-440 are involved in sequence-specific DNA-binding.

Post-translationally, cleaved by caspase ced-3 in vitro. As to expression, high levels in hypodermal, intestinal, body wall muscle, nerve ring, and ventral nerve cord cells of embryos and L1 animals.

The protein resides in the nucleus. Functionally, heterochronic protein which controls the choice of stage specific cell fates. Involved in the temporal progression of vulval fate patterning, possibly by inhibiting lin-12. Acts as a transcription factor involved in the stage-specific repression of various genes, including insulin/insulin-like growth factor gene ins-33 and neuropeptide-encoding gene nlp-45. Binds to the consensus sequence 5'-[CT]GGA[AG]-3' in the regulatory elements of target genes. Plays a role in governing the developmental timing of male tail tip morphogenesis. Plays a role in controlling the timing of seam cell development during the larval stages. Plays a role in promoting survival at high temperatures in larvae. Involved in maintenance of the architecture of the ventral nerve cord, perhaps acting via modulating expression of the immunoglobulin domain gene zig-4. In terms of biological role, may specify L2 and later cell fates, creating a temporal switch. May be involved in specifying L1 cell fates. This chain is Protein lin-14, found in Caenorhabditis elegans.